The primary structure comprises 246 residues: 1-(5-phosphoribosyl)-5-[(5-phosphoribosylamino)methylideneamino] imidazole-4-carboxamide isomerase (246 aa).

D8 serves as the catalytic Proton acceptor. D130 acts as the Proton donor in catalysis.

Belongs to the HisA/HisF family.

The protein resides in the cytoplasm. The catalysed reaction is 1-(5-phospho-beta-D-ribosyl)-5-[(5-phospho-beta-D-ribosylamino)methylideneamino]imidazole-4-carboxamide = 5-[(5-phospho-1-deoxy-D-ribulos-1-ylimino)methylamino]-1-(5-phospho-beta-D-ribosyl)imidazole-4-carboxamide. The protein operates within amino-acid biosynthesis; L-histidine biosynthesis; L-histidine from 5-phospho-alpha-D-ribose 1-diphosphate: step 4/9. The polypeptide is 1-(5-phosphoribosyl)-5-[(5-phosphoribosylamino)methylideneamino] imidazole-4-carboxamide isomerase (Hydrogenovibrio crunogenus (strain DSM 25203 / XCL-2) (Thiomicrospira crunogena)).